A 447-amino-acid polypeptide reads, in one-letter code: tRNA (guanine(37)-N(1))-methyltransferase (447 aa).

S-adenosyl-L-methionine contacts are provided by residues H241, 285 to 286 (DL), and 313 to 314 (DV).

This sequence belongs to the class I-like SAM-binding methyltransferase superfamily. TRM5/TYW2 family. In terms of assembly, monomer.

The protein localises to the mitochondrion matrix. It localises to the nucleus. The protein resides in the cytoplasm. It carries out the reaction guanosine(37) in tRNA + S-adenosyl-L-methionine = N(1)-methylguanosine(37) in tRNA + S-adenosyl-L-homocysteine + H(+). In terms of biological role, specifically methylates the N1 position of guanosine-37 in various cytoplasmic and mitochondrial tRNAs. Methylation is not dependent on the nature of the nucleoside 5' of the target nucleoside. This is the first step in the biosynthesis of wybutosine (yW), a modified base adjacent to the anticodon of tRNAs and required for accurate decoding. The protein is tRNA (guanine(37)-N(1))-methyltransferase of Giardia intestinalis (strain ATCC 50803 / WB clone C6) (Giardia lamblia).